A 345-amino-acid polypeptide reads, in one-letter code: Tropomodulin-4 (345 aa).

2 disordered regions span residues 40-64 (PENMLLPAGLRQRDQTKKSPTGPLD) and 326-345 (ARAAHAMTRNNELRRQQKKR). Positions 336–345 (NELRRQQKKR) are enriched in basic and acidic residues.

The protein belongs to the tropomodulin family. In terms of assembly, binds to the N-terminus of tropomyosin and to actin.

The protein resides in the cytoplasm. Its subcellular location is the cytoskeleton. In terms of biological role, blocks the elongation and depolymerization of the actin filaments at the pointed end. The Tmod/TM complex contributes to the formation of the short actin protofilament, which in turn defines the geometry of the membrane skeleton. The protein is Tropomodulin-4 (Tmod4) of Mus musculus (Mouse).